Reading from the N-terminus, the 335-residue chain is Pyridoxal 5'-phosphate synthase subunit PdxS (335 aa).

D30 provides a ligand contact to D-ribose 5-phosphate. Residue K87 is the Schiff-base intermediate with D-ribose 5-phosphate of the active site. Residue G159 coordinates D-ribose 5-phosphate. R171 serves as a coordination point for D-glyceraldehyde 3-phosphate. D-ribose 5-phosphate contacts are provided by residues G257 and 278–279 (GS).

Belongs to the PdxS/SNZ family. As to quaternary structure, in the presence of PdxT, forms a dodecamer of heterodimers.

It carries out the reaction aldehydo-D-ribose 5-phosphate + D-glyceraldehyde 3-phosphate + L-glutamine = pyridoxal 5'-phosphate + L-glutamate + phosphate + 3 H2O + H(+). It functions in the pathway cofactor biosynthesis; pyridoxal 5'-phosphate biosynthesis. Catalyzes the formation of pyridoxal 5'-phosphate from ribose 5-phosphate (RBP), glyceraldehyde 3-phosphate (G3P) and ammonia. The ammonia is provided by the PdxT subunit. Can also use ribulose 5-phosphate and dihydroxyacetone phosphate as substrates, resulting from enzyme-catalyzed isomerization of RBP and G3P, respectively. The polypeptide is Pyridoxal 5'-phosphate synthase subunit PdxS (Thermococcus onnurineus (strain NA1)).